The following is a 351-amino-acid chain: S-adenosylmethionine:tRNA ribosyltransferase-isomerase (351 aa).

This sequence belongs to the QueA family. In terms of assembly, monomer.

It is found in the cytoplasm. The catalysed reaction is 7-aminomethyl-7-carbaguanosine(34) in tRNA + S-adenosyl-L-methionine = epoxyqueuosine(34) in tRNA + adenine + L-methionine + 2 H(+). The protein operates within tRNA modification; tRNA-queuosine biosynthesis. Its function is as follows. Transfers and isomerizes the ribose moiety from AdoMet to the 7-aminomethyl group of 7-deazaguanine (preQ1-tRNA) to give epoxyqueuosine (oQ-tRNA). The protein is S-adenosylmethionine:tRNA ribosyltransferase-isomerase of Idiomarina loihiensis (strain ATCC BAA-735 / DSM 15497 / L2-TR).